The primary structure comprises 285 residues: 2,3,4,5-tetrahydropyridine-2,6-dicarboxylate N-succinyltransferase (285 aa).

Substrate is bound by residues Arg111 and Asp148.

Belongs to the transferase hexapeptide repeat family. In terms of assembly, homotrimer.

The protein resides in the cytoplasm. It catalyses the reaction (S)-2,3,4,5-tetrahydrodipicolinate + succinyl-CoA + H2O = (S)-2-succinylamino-6-oxoheptanedioate + CoA. It participates in amino-acid biosynthesis; L-lysine biosynthesis via DAP pathway; LL-2,6-diaminopimelate from (S)-tetrahydrodipicolinate (succinylase route): step 1/3. This Sinorhizobium fredii (strain NBRC 101917 / NGR234) protein is 2,3,4,5-tetrahydropyridine-2,6-dicarboxylate N-succinyltransferase.